We begin with the raw amino-acid sequence, 566 residues long: Type 3 secretion system secretin (566 aa).

A signal peptide spans 1 to 22 (MKKFNIKSLTLLIVLLPLIVNA).

Belongs to the bacterial secretin family. T3SS SctC subfamily. The core secretion machinery of the T3SS is composed of approximately 20 different proteins, including cytoplasmic components, a base, an export apparatus and a needle. This subunit is part of the base, which anchors the injectisome in the bacterial cell envelope. Forms a stable homooligomeric complex. Interacts with the pilotin MxiM/SctG and the inner membrane ring outer protein MxiJ/SctJ.

It localises to the cell outer membrane. Component of the type III secretion system (T3SS), also called injectisome, which is used to inject bacterial effector proteins into eukaryotic host cells. Forms a ring-shaped multimeric structure with an apparent central pore in the outer membrane. Necessary for the secretion of Ipa invasins. The protein is Type 3 secretion system secretin of Shigella flexneri.